We begin with the raw amino-acid sequence, 149 residues long: Large ribosomal subunit protein bL9 (149 aa).

The protein belongs to the bacterial ribosomal protein bL9 family.

Functionally, binds to the 23S rRNA. The protein is Large ribosomal subunit protein bL9 of Cutibacterium acnes (strain DSM 16379 / KPA171202) (Propionibacterium acnes).